Consider the following 237-residue polypeptide: Uridylate kinase (237 aa).

12 to 15 (KLSG) is an ATP binding site. The interval 20 to 25 (GAEGFG) is involved in allosteric activation by GTP. Residue Gly-54 coordinates UMP. Gly-55 and Arg-59 together coordinate ATP. UMP-binding positions include Asp-74 and 135-142 (TGSPFFTT). The ATP site is built by Thr-162, Tyr-168, and Asp-171.

This sequence belongs to the UMP kinase family. Homohexamer.

Its subcellular location is the cytoplasm. The enzyme catalyses UMP + ATP = UDP + ADP. Its pathway is pyrimidine metabolism; CTP biosynthesis via de novo pathway; UDP from UMP (UMPK route): step 1/1. Its activity is regulated as follows. Allosterically activated by GTP. Inhibited by UTP. In terms of biological role, catalyzes the reversible phosphorylation of UMP to UDP. In Actinobacillus succinogenes (strain ATCC 55618 / DSM 22257 / CCUG 43843 / 130Z), this protein is Uridylate kinase.